The following is a 285-amino-acid chain: Inhibitor of growth protein 5 (285 aa).

Positions 116-225 (EKASSTRAKS…ATHPSDVMDM (110 aa)) are disordered. Over residues 131–149 (KKGRKKTKDSKTTGKKKKS) the composition is skewed to basic residues. The segment covering 160-178 (NNQSNANSSVNSSSNAGQG) has biased composition (low complexity). A PHD-type zinc finger spans residues 232-281 (PTYCLCHQVSYGEMIGCDNPDCPIEWFHFACVGLTTKPKGKWFCPKCTQD). Residues Cys235, Cys237, Cys248, Cys253, His259, Cys262, Cys275, and Cys278 each coordinate Zn(2+).

It belongs to the ING family. Component of the Enok complex composed of at least Br140, enok, Eaf6 and Ing5.

The protein resides in the nucleus. Its subcellular location is the chromosome. Its function is as follows. Component of the Enok complex which has a histone H3 acetyltransferase activity. This chain is Inhibitor of growth protein 5, found in Drosophila melanogaster (Fruit fly).